A 652-amino-acid polypeptide reads, in one-letter code: Acetyl-coenzyme A synthetase (652 aa).

CoA is bound by residues 191 to 194, Thr-311, and Asn-335; that span reads RAGR. ATP contacts are provided by residues 387-389, 411-416, Asp-500, and Arg-515; these read GEP and DTWWQT. Ser-523 contacts CoA. An ATP-binding site is contributed by Arg-526. Val-537, His-539, and Ile-542 together coordinate Mg(2+). Arg-584 contributes to the CoA binding site. N6-acetyllysine is present on Lys-609.

It belongs to the ATP-dependent AMP-binding enzyme family. The cofactor is Mg(2+). Acetylated. Deacetylation by the SIR2-homolog deacetylase activates the enzyme.

It catalyses the reaction acetate + ATP + CoA = acetyl-CoA + AMP + diphosphate. Its function is as follows. Catalyzes the conversion of acetate into acetyl-CoA (AcCoA), an essential intermediate at the junction of anabolic and catabolic pathways. Acs undergoes a two-step reaction. In the first half reaction, Acs combines acetate with ATP to form acetyl-adenylate (AcAMP) intermediate. In the second half reaction, it can then transfer the acetyl group from AcAMP to the sulfhydryl group of CoA, forming the product AcCoA. Functionally, enables the cell to use acetate during aerobic growth to generate energy via the TCA cycle, and biosynthetic compounds via the glyoxylate shunt. Acetylates CheY, the response regulator involved in flagellar movement and chemotaxis. The protein is Acetyl-coenzyme A synthetase of Cronobacter sakazakii (strain ATCC BAA-894) (Enterobacter sakazakii).